A 158-amino-acid chain; its full sequence is Transcription elongation factor GreA (158 aa).

This sequence belongs to the GreA/GreB family.

Necessary for efficient RNA polymerase transcription elongation past template-encoded arresting sites. The arresting sites in DNA have the property of trapping a certain fraction of elongating RNA polymerases that pass through, resulting in locked ternary complexes. Cleavage of the nascent transcript by cleavage factors such as GreA or GreB allows the resumption of elongation from the new 3'terminus. GreA releases sequences of 2 to 3 nucleotides. In Rhizobium etli (strain CIAT 652), this protein is Transcription elongation factor GreA.